The sequence spans 671 residues: DNA ligase (671 aa).

NAD(+) is bound by residues 32-36, 81-82, and Glu113; these read DAEYD and SL. Lys115 functions as the N6-AMP-lysine intermediate in the catalytic mechanism. NAD(+) is bound by residues Arg136, Glu173, Lys290, and Lys314. Zn(2+)-binding residues include Cys408, Cys411, Cys426, and Cys432. Positions 593-671 constitute a BRCT domain; sequence EIDSPFAGKT…EAEMIRLLGA (79 aa).

This sequence belongs to the NAD-dependent DNA ligase family. LigA subfamily. Mg(2+) serves as cofactor. The cofactor is Mn(2+).

It carries out the reaction NAD(+) + (deoxyribonucleotide)n-3'-hydroxyl + 5'-phospho-(deoxyribonucleotide)m = (deoxyribonucleotide)n+m + AMP + beta-nicotinamide D-nucleotide.. Its function is as follows. DNA ligase that catalyzes the formation of phosphodiester linkages between 5'-phosphoryl and 3'-hydroxyl groups in double-stranded DNA using NAD as a coenzyme and as the energy source for the reaction. It is essential for DNA replication and repair of damaged DNA. The sequence is that of DNA ligase from Salmonella paratyphi B (strain ATCC BAA-1250 / SPB7).